The following is a 67-amino-acid chain: Retron Se72 cold shock-like protein (67 aa).

The CSD domain occupies 1-66; it reads MENGFVNFYD…KGFKAVAIQK (66 aa).

Probable cold shock-like component of antiviral defense system retron Se72, composed of a non-coding RNA (ncRNA), a reverse transcriptase (RT) and this protein. Expression of retron Se72 confers protection against bacteriophage lambda. At multiplicity of infection (MOI) of 0.02 cultures slow growth when infected with lambda but do not collapse, at MOI 2 cultures enter growth stasis. The sequence is that of Retron Se72 cold shock-like protein from Salmonella heidelberg (strain 579083-10).